We begin with the raw amino-acid sequence, 398 residues long: Argininosuccinate synthase (398 aa).

Position 8–16 (8–16 (AYSGGLDTS)) interacts with ATP. Tyr-87 is an L-citrulline binding site. Gly-117 is a binding site for ATP. L-aspartate-binding residues include Thr-119, Asn-123, and Asp-124. An L-citrulline-binding site is contributed by Asn-123. 4 residues coordinate L-citrulline: Arg-127, Ser-175, Glu-260, and Tyr-272.

This sequence belongs to the argininosuccinate synthase family. Type 1 subfamily. As to quaternary structure, homotetramer.

Its subcellular location is the cytoplasm. The catalysed reaction is L-citrulline + L-aspartate + ATP = 2-(N(omega)-L-arginino)succinate + AMP + diphosphate + H(+). Its pathway is amino-acid biosynthesis; L-arginine biosynthesis; L-arginine from L-ornithine and carbamoyl phosphate: step 2/3. The protein is Argininosuccinate synthase of Mycobacterium ulcerans (strain Agy99).